A 472-amino-acid chain; its full sequence is Aspartyl/glutamyl-tRNA(Asn/Gln) amidotransferase subunit B (472 aa).

It belongs to the GatB/GatE family. GatB subfamily. As to quaternary structure, heterotrimer of A, B and C subunits.

The enzyme catalyses L-glutamyl-tRNA(Gln) + L-glutamine + ATP + H2O = L-glutaminyl-tRNA(Gln) + L-glutamate + ADP + phosphate + H(+). It catalyses the reaction L-aspartyl-tRNA(Asn) + L-glutamine + ATP + H2O = L-asparaginyl-tRNA(Asn) + L-glutamate + ADP + phosphate + 2 H(+). Functionally, allows the formation of correctly charged Asn-tRNA(Asn) or Gln-tRNA(Gln) through the transamidation of misacylated Asp-tRNA(Asn) or Glu-tRNA(Gln) in organisms which lack either or both of asparaginyl-tRNA or glutaminyl-tRNA synthetases. The reaction takes place in the presence of glutamine and ATP through an activated phospho-Asp-tRNA(Asn) or phospho-Glu-tRNA(Gln). In Mycoplasmopsis agalactiae (strain NCTC 10123 / CIP 59.7 / PG2) (Mycoplasma agalactiae), this protein is Aspartyl/glutamyl-tRNA(Asn/Gln) amidotransferase subunit B.